We begin with the raw amino-acid sequence, 540 residues long: Ecdysone 20-monooxygenase (540 aa).

Cys-488 is a heme binding site.

It belongs to the cytochrome P450 family. Heme is required as a cofactor. In terms of tissue distribution, strong expression by embryonic stage 10 in epidermis, decreases significantly in older embryos. Third instar larvae show expression in the midgut copper cells, Malpighian tubules and fat body. In the adult ovaries, expression is seen in both nurse cells and centripetally migrating follicle cells.

The protein resides in the mitochondrion membrane. The enzyme catalyses ecdysone + AH2 + O2 = 20-hydroxyecdysone + A + H2O. It participates in steroid biosynthesis; ecdysteroid biosynthesis. Functionally, required for CNS development; midline glial cells. Involved in the metabolism of insect hormones; responsible for all ecdysone 20-monooxygenase activity during embryonic, larval and adult stages. May be involved in the breakdown of synthetic insecticides. This chain is Ecdysone 20-monooxygenase (shd), found in Drosophila melanogaster (Fruit fly).